We begin with the raw amino-acid sequence, 339 residues long: Ketol-acid reductoisomerase (NADP(+)) (339 aa).

Residues 1 to 182 form the KARI N-terminal Rossmann domain; the sequence is MRVYYDRDAD…GGGRSGIIET (182 aa). NADP(+) is bound by residues 24–27, Lys48, Ser51, Thr53, and 83–86; these read YGSQ and DELQ. His108 is an active-site residue. Position 134 (Gly134) interacts with NADP(+). Residues 183–328 form the KARI C-terminal knotted domain; the sequence is NFREECETDL…AKLRGMMPWI (146 aa). The Mg(2+) site is built by Asp191, Glu195, Glu227, and Glu231. Residue Ser252 coordinates substrate.

Belongs to the ketol-acid reductoisomerase family. Mg(2+) serves as cofactor.

It catalyses the reaction (2R)-2,3-dihydroxy-3-methylbutanoate + NADP(+) = (2S)-2-acetolactate + NADPH + H(+). The catalysed reaction is (2R,3R)-2,3-dihydroxy-3-methylpentanoate + NADP(+) = (S)-2-ethyl-2-hydroxy-3-oxobutanoate + NADPH + H(+). It participates in amino-acid biosynthesis; L-isoleucine biosynthesis; L-isoleucine from 2-oxobutanoate: step 2/4. The protein operates within amino-acid biosynthesis; L-valine biosynthesis; L-valine from pyruvate: step 2/4. Its function is as follows. Involved in the biosynthesis of branched-chain amino acids (BCAA). Catalyzes an alkyl-migration followed by a ketol-acid reduction of (S)-2-acetolactate (S2AL) to yield (R)-2,3-dihydroxy-isovalerate. In the isomerase reaction, S2AL is rearranged via a Mg-dependent methyl migration to produce 3-hydroxy-3-methyl-2-ketobutyrate (HMKB). In the reductase reaction, this 2-ketoacid undergoes a metal-dependent reduction by NADPH to yield (R)-2,3-dihydroxy-isovalerate. The sequence is that of Ketol-acid reductoisomerase (NADP(+)) from Rhizobium etli (strain ATCC 51251 / DSM 11541 / JCM 21823 / NBRC 15573 / CFN 42).